Reading from the N-terminus, the 347-residue chain is Lipoyl synthase (347 aa).

Residues Cys-77, Cys-82, Cys-88, Cys-103, Cys-107, Cys-110, and Ser-317 each coordinate [4Fe-4S] cluster. In terms of domain architecture, Radical SAM core spans Phe-89–Phe-306.

The protein belongs to the radical SAM superfamily. Lipoyl synthase family. It depends on [4Fe-4S] cluster as a cofactor.

Its subcellular location is the cytoplasm. It carries out the reaction [[Fe-S] cluster scaffold protein carrying a second [4Fe-4S](2+) cluster] + N(6)-octanoyl-L-lysyl-[protein] + 2 oxidized [2Fe-2S]-[ferredoxin] + 2 S-adenosyl-L-methionine + 4 H(+) = [[Fe-S] cluster scaffold protein] + N(6)-[(R)-dihydrolipoyl]-L-lysyl-[protein] + 4 Fe(3+) + 2 hydrogen sulfide + 2 5'-deoxyadenosine + 2 L-methionine + 2 reduced [2Fe-2S]-[ferredoxin]. It functions in the pathway protein modification; protein lipoylation via endogenous pathway; protein N(6)-(lipoyl)lysine from octanoyl-[acyl-carrier-protein]: step 2/2. Functionally, catalyzes the radical-mediated insertion of two sulfur atoms into the C-6 and C-8 positions of the octanoyl moiety bound to the lipoyl domains of lipoate-dependent enzymes, thereby converting the octanoylated domains into lipoylated derivatives. This chain is Lipoyl synthase, found in Psychrobacter cryohalolentis (strain ATCC BAA-1226 / DSM 17306 / VKM B-2378 / K5).